A 570-amino-acid polypeptide reads, in one-letter code: Urease subunit alpha (570 aa).

The 440-residue stretch at 131 to 570 (GGMDSHIHFI…LPMAQRYFLF (440 aa)) folds into the Urease domain. H136, H138, and K219 together coordinate Ni(2+). K219 carries the post-translational modification N6-carboxylysine. A substrate-binding site is contributed by H221. Residues H248 and H274 each contribute to the Ni(2+) site. H322 serves as the catalytic Proton donor. D362 provides a ligand contact to Ni(2+).

The protein belongs to the metallo-dependent hydrolases superfamily. Urease alpha subunit family. Heterotrimer of UreA (gamma), UreB (beta) and UreC (alpha) subunits. Three heterotrimers associate to form the active enzyme. Requires Ni cation as cofactor. Post-translationally, carboxylation allows a single lysine to coordinate two nickel ions.

The protein localises to the cytoplasm. It carries out the reaction urea + 2 H2O + H(+) = hydrogencarbonate + 2 NH4(+). It participates in nitrogen metabolism; urea degradation; CO(2) and NH(3) from urea (urease route): step 1/1. This chain is Urease subunit alpha, found in Rhizobium etli (strain ATCC 51251 / DSM 11541 / JCM 21823 / NBRC 15573 / CFN 42).